Reading from the N-terminus, the 1387-residue chain is Collagen-like protein 6 (1387 aa).

Residue Asn6 is glycosylated (N-linked (GlcNAc...) asparagine; by host). Collagen-like domains are found at residues Gly95–Ile154, Gly161–Asn220, Gly266–Met325, Gly344–Lys403, Ile450–Ile508, and Gly512–Ser751. Disordered regions lie at residues Gly98 to Asp219, Lys268 to Gly422, and Lys454 to Gln753. Composition is skewed to basic and acidic residues over residues Ile114–Lys181, Ser189–Lys199, Ser207–Asp219, Lys268–Lys340, Lys364–Asn382, Ser390–Glu405, Lys454–Ile535, and Lys544–Glu747. Asn794, Asn814, Asn819, Asn826, Asn846, Asn886, Asn894, Asn969, Asn1032, Asn1077, Asn1123, Asn1200, Asn1224, Asn1232, and Asn1233 each carry an N-linked (GlcNAc...) asparagine; by host glycan.

Post-translationally, may be hydroxylated on lysine by the viral-encoded procollagen-lysine,2-oxoglutarate 5-dioxygenase.

The protein resides in the virion. May participate in the formation of a layer of cross-linked glycosylated fibrils at the viral surface thus giving it a hairy-like appearance. The protein is Collagen-like protein 6 of Acanthamoeba polyphaga mimivirus (APMV).